The following is a 188-amino-acid chain: Elongation factor P (188 aa).

Residue Lys34 is modified to N6-(3,6-diaminohexanoyl)-5-hydroxylysine.

The protein belongs to the elongation factor P family. May be beta-lysylated on the epsilon-amino group of Lys-34 by the combined action of EpmA and EpmB, and then hydroxylated on the C5 position of the same residue by EpmC (if this protein is present). Lysylation is critical for the stimulatory effect of EF-P on peptide-bond formation. The lysylation moiety may extend toward the peptidyltransferase center and stabilize the terminal 3-CCA end of the tRNA. Hydroxylation of the C5 position on Lys-34 may allow additional potential stabilizing hydrogen-bond interactions with the P-tRNA.

It localises to the cytoplasm. Its pathway is protein biosynthesis; polypeptide chain elongation. In terms of biological role, involved in peptide bond synthesis. Alleviates ribosome stalling that occurs when 3 or more consecutive Pro residues or the sequence PPG is present in a protein, possibly by augmenting the peptidyl transferase activity of the ribosome. Modification of Lys-34 is required for alleviation. The protein is Elongation factor P of Methylococcus capsulatus (strain ATCC 33009 / NCIMB 11132 / Bath).